A 239-amino-acid polypeptide reads, in one-letter code: Purine nucleoside phosphorylase DeoD-type 1 (239 aa).

H5 serves as a coordination point for a purine D-ribonucleoside. Residues G21, R25, R44, and 88–91 (RVGS) contribute to the phosphate site. Residues 180-182 (EME) and 204-205 (SD) contribute to the a purine D-ribonucleoside site. The active-site Proton donor is the D205.

This sequence belongs to the PNP/UDP phosphorylase family. Homohexamer; trimer of homodimers.

The enzyme catalyses a purine D-ribonucleoside + phosphate = a purine nucleobase + alpha-D-ribose 1-phosphate. The catalysed reaction is a purine 2'-deoxy-D-ribonucleoside + phosphate = a purine nucleobase + 2-deoxy-alpha-D-ribose 1-phosphate. In terms of biological role, catalyzes the reversible phosphorolytic breakdown of the N-glycosidic bond in the beta-(deoxy)ribonucleoside molecules, with the formation of the corresponding free purine bases and pentose-1-phosphate. The polypeptide is Purine nucleoside phosphorylase DeoD-type 1 (Vibrio vulnificus (strain CMCP6)).